A 286-amino-acid polypeptide reads, in one-letter code: Lipoyl synthase (286 aa).

[4Fe-4S] cluster-binding residues include Cys38, Cys43, Cys49, Cys64, Cys68, Cys71, and Ser276. Positions 50-265 constitute a Radical SAM core domain; sequence WEQGVATFMI…ENIALDMGFL (216 aa).

It belongs to the radical SAM superfamily. Lipoyl synthase family. [4Fe-4S] cluster is required as a cofactor.

The protein resides in the cytoplasm. It catalyses the reaction [[Fe-S] cluster scaffold protein carrying a second [4Fe-4S](2+) cluster] + N(6)-octanoyl-L-lysyl-[protein] + 2 oxidized [2Fe-2S]-[ferredoxin] + 2 S-adenosyl-L-methionine + 4 H(+) = [[Fe-S] cluster scaffold protein] + N(6)-[(R)-dihydrolipoyl]-L-lysyl-[protein] + 4 Fe(3+) + 2 hydrogen sulfide + 2 5'-deoxyadenosine + 2 L-methionine + 2 reduced [2Fe-2S]-[ferredoxin]. It functions in the pathway protein modification; protein lipoylation via endogenous pathway; protein N(6)-(lipoyl)lysine from octanoyl-[acyl-carrier-protein]: step 2/2. In terms of biological role, catalyzes the radical-mediated insertion of two sulfur atoms into the C-6 and C-8 positions of the octanoyl moiety bound to the lipoyl domains of lipoate-dependent enzymes, thereby converting the octanoylated domains into lipoylated derivatives. The polypeptide is Lipoyl synthase (Karelsulcia muelleri (strain GWSS) (Sulcia muelleri)).